Consider the following 602-residue polypeptide: 4-hydroxy-3-methylbut-2-en-1-yl diphosphate synthase (flavodoxin) (602 aa).

Residues Cys-508, Cys-511, Cys-543, and Glu-550 each coordinate [4Fe-4S] cluster.

It belongs to the IspG family. [4Fe-4S] cluster is required as a cofactor.

It carries out the reaction (2E)-4-hydroxy-3-methylbut-2-enyl diphosphate + oxidized [flavodoxin] + H2O + 2 H(+) = 2-C-methyl-D-erythritol 2,4-cyclic diphosphate + reduced [flavodoxin]. Its pathway is isoprenoid biosynthesis; isopentenyl diphosphate biosynthesis via DXP pathway; isopentenyl diphosphate from 1-deoxy-D-xylulose 5-phosphate: step 5/6. Functionally, converts 2C-methyl-D-erythritol 2,4-cyclodiphosphate (ME-2,4cPP) into 1-hydroxy-2-methyl-2-(E)-butenyl 4-diphosphate. The polypeptide is 4-hydroxy-3-methylbut-2-en-1-yl diphosphate synthase (flavodoxin) (Chlamydia trachomatis serovar L2 (strain ATCC VR-902B / DSM 19102 / 434/Bu)).